The sequence spans 259 residues: Ribonuclease PH (259 aa).

Phosphate-binding positions include arginine 88 and 126 to 128 (GTR).

Belongs to the RNase PH family. Homohexameric ring arranged as a trimer of dimers.

The enzyme catalyses tRNA(n+1) + phosphate = tRNA(n) + a ribonucleoside 5'-diphosphate. Its function is as follows. Phosphorolytic 3'-5' exoribonuclease that plays an important role in tRNA 3'-end maturation. Removes nucleotide residues following the 3'-CCA terminus of tRNAs; can also add nucleotides to the ends of RNA molecules by using nucleoside diphosphates as substrates, but this may not be physiologically important. Probably plays a role in initiation of 16S rRNA degradation (leading to ribosome degradation) during starvation. The protein is Ribonuclease PH of Mycobacterium bovis (strain ATCC BAA-935 / AF2122/97).